Consider the following 34-residue polypeptide: Corticostatin-6 (34 aa).

Intrachain disulfides connect Cys3–Cys31, Cys5–Cys20, and Cys10–Cys30.

It belongs to the alpha-defensin family. In terms of tissue distribution, lung, spleen, small intestine, pituitary gland, adrenal medulla and plasma.

The protein localises to the secreted. In terms of biological role, microbicidal activity and inhibits corticotropin (ACTH) stimulated corticosterone production. The polypeptide is Corticostatin-6 (Oryctolagus cuniculus (Rabbit)).